The following is a 1034-amino-acid chain: Phosphoenolpyruvate carboxylase (1034 aa).

Catalysis depends on residues His-203 and Lys-680.

The protein belongs to the PEPCase type 1 family. The cofactor is Mg(2+).

It carries out the reaction oxaloacetate + phosphate = phosphoenolpyruvate + hydrogencarbonate. Its function is as follows. Forms oxaloacetate, a four-carbon dicarboxylic acid source for the tricarboxylic acid cycle. The sequence is that of Phosphoenolpyruvate carboxylase (ppc) from Synechocystis sp. (strain ATCC 27184 / PCC 6803 / Kazusa).